The following is a 297-amino-acid chain: Phosphoribosylaminoimidazole-succinocarboxamide synthase (297 aa).

This sequence belongs to the SAICAR synthetase family.

It catalyses the reaction 5-amino-1-(5-phospho-D-ribosyl)imidazole-4-carboxylate + L-aspartate + ATP = (2S)-2-[5-amino-1-(5-phospho-beta-D-ribosyl)imidazole-4-carboxamido]succinate + ADP + phosphate + 2 H(+). The protein operates within purine metabolism; IMP biosynthesis via de novo pathway; 5-amino-1-(5-phospho-D-ribosyl)imidazole-4-carboxamide from 5-amino-1-(5-phospho-D-ribosyl)imidazole-4-carboxylate: step 1/2. This Corynebacterium urealyticum (strain ATCC 43042 / DSM 7109) protein is Phosphoribosylaminoimidazole-succinocarboxamide synthase.